Consider the following 156-residue polypeptide: Small ribosomal subunit protein uS7 (156 aa).

The protein belongs to the universal ribosomal protein uS7 family. Part of the 30S ribosomal subunit. Contacts proteins S9 and S11.

Its function is as follows. One of the primary rRNA binding proteins, it binds directly to 16S rRNA where it nucleates assembly of the head domain of the 30S subunit. Is located at the subunit interface close to the decoding center, probably blocks exit of the E-site tRNA. This Thermobifida fusca (strain YX) protein is Small ribosomal subunit protein uS7.